A 158-amino-acid chain; its full sequence is Transcription elongation factor GreA (158 aa).

A coiled-coil region spans residues 53 to 73; the sequence is EQQGFIEGRIKEIEAKLSNAQ.

The protein belongs to the GreA/GreB family.

Its function is as follows. Necessary for efficient RNA polymerase transcription elongation past template-encoded arresting sites. The arresting sites in DNA have the property of trapping a certain fraction of elongating RNA polymerases that pass through, resulting in locked ternary complexes. Cleavage of the nascent transcript by cleavage factors such as GreA or GreB allows the resumption of elongation from the new 3'terminus. GreA releases sequences of 2 to 3 nucleotides. This is Transcription elongation factor GreA from Thioalkalivibrio sulfidiphilus (strain HL-EbGR7).